Here is a 197-residue protein sequence, read N- to C-terminus: Holliday junction branch migration complex subunit RuvA (197 aa).

The segment at M1–L64 is domain I. The interval T65–I144 is domain II. Residues I145–A149 are flexible linker. The tract at residues A149 to K197 is domain III.

The protein belongs to the RuvA family. As to quaternary structure, homotetramer. Forms an RuvA(8)-RuvB(12)-Holliday junction (HJ) complex. HJ DNA is sandwiched between 2 RuvA tetramers; dsDNA enters through RuvA and exits via RuvB. An RuvB hexamer assembles on each DNA strand where it exits the tetramer. Each RuvB hexamer is contacted by two RuvA subunits (via domain III) on 2 adjacent RuvB subunits; this complex drives branch migration. In the full resolvosome a probable DNA-RuvA(4)-RuvB(12)-RuvC(2) complex forms which resolves the HJ.

Its subcellular location is the cytoplasm. In terms of biological role, the RuvA-RuvB-RuvC complex processes Holliday junction (HJ) DNA during genetic recombination and DNA repair, while the RuvA-RuvB complex plays an important role in the rescue of blocked DNA replication forks via replication fork reversal (RFR). RuvA specifically binds to HJ cruciform DNA, conferring on it an open structure. The RuvB hexamer acts as an ATP-dependent pump, pulling dsDNA into and through the RuvAB complex. HJ branch migration allows RuvC to scan DNA until it finds its consensus sequence, where it cleaves and resolves the cruciform DNA. This Clostridium botulinum (strain ATCC 19397 / Type A) protein is Holliday junction branch migration complex subunit RuvA.